The sequence spans 288 residues: Bifunctional protein FolD (288 aa).

Residues 166–168 and Ile232 contribute to the NADP(+) site; that span reads GAS.

This sequence belongs to the tetrahydrofolate dehydrogenase/cyclohydrolase family. In terms of assembly, homodimer.

The catalysed reaction is (6R)-5,10-methylene-5,6,7,8-tetrahydrofolate + NADP(+) = (6R)-5,10-methenyltetrahydrofolate + NADPH. It catalyses the reaction (6R)-5,10-methenyltetrahydrofolate + H2O = (6R)-10-formyltetrahydrofolate + H(+). It participates in one-carbon metabolism; tetrahydrofolate interconversion. Catalyzes the oxidation of 5,10-methylenetetrahydrofolate to 5,10-methenyltetrahydrofolate and then the hydrolysis of 5,10-methenyltetrahydrofolate to 10-formyltetrahydrofolate. This is Bifunctional protein FolD from Escherichia fergusonii (strain ATCC 35469 / DSM 13698 / CCUG 18766 / IAM 14443 / JCM 21226 / LMG 7866 / NBRC 102419 / NCTC 12128 / CDC 0568-73).